The primary structure comprises 383 residues: Succinyl-diaminopimelate desuccinylase (383 aa).

Residue histidine 74 participates in Zn(2+) binding. Aspartate 76 is an active-site residue. Aspartate 107 contributes to the Zn(2+) binding site. Residue glutamate 141 is the Proton acceptor of the active site. Residues glutamate 142, glutamate 170, and histidine 356 each contribute to the Zn(2+) site.

The protein belongs to the peptidase M20A family. DapE subfamily. Homodimer. The cofactor is Zn(2+). Co(2+) serves as cofactor.

The enzyme catalyses N-succinyl-(2S,6S)-2,6-diaminopimelate + H2O = (2S,6S)-2,6-diaminopimelate + succinate. Its pathway is amino-acid biosynthesis; L-lysine biosynthesis via DAP pathway; LL-2,6-diaminopimelate from (S)-tetrahydrodipicolinate (succinylase route): step 3/3. In terms of biological role, catalyzes the hydrolysis of N-succinyl-L,L-diaminopimelic acid (SDAP), forming succinate and LL-2,6-diaminopimelate (DAP), an intermediate involved in the bacterial biosynthesis of lysine and meso-diaminopimelic acid, an essential component of bacterial cell walls. This is Succinyl-diaminopimelate desuccinylase from Ralstonia nicotianae (strain ATCC BAA-1114 / GMI1000) (Ralstonia solanacearum).